The sequence spans 185 residues: Potassium-transporting ATPase KdpC subunit (185 aa).

The helical transmembrane segment at 14 to 34 threads the bilayer; it reads ALSLLTGVAYPLALTGIAAVI. Residues 105 to 128 form a disordered region; that stretch reads AQNGAPAPVDAVTASGSGLDPHVS.

The protein belongs to the KdpC family. The system is composed of three essential subunits: KdpA, KdpB and KdpC.

The protein resides in the cell inner membrane. Its function is as follows. Part of the high-affinity ATP-driven potassium transport (or Kdp) system, which catalyzes the hydrolysis of ATP coupled with the electrogenic transport of potassium into the cytoplasm. This subunit acts as a catalytic chaperone that increases the ATP-binding affinity of the ATP-hydrolyzing subunit KdpB by the formation of a transient KdpB/KdpC/ATP ternary complex. The chain is Potassium-transporting ATPase KdpC subunit from Cereibacter sphaeroides (strain ATCC 17029 / ATH 2.4.9) (Rhodobacter sphaeroides).